The chain runs to 229 residues: uncharacterized protein (229 aa).

This is an uncharacterized protein from Bacillus subtilis (strain 168).